The following is a 257-amino-acid chain: MNVSSFLLAIDSGNTAIKWGLHTGDQWLVRGSALQSERMVLKQAWALLPAPPASVLISNVAGLQAADDLTALLKPWYVQPHWITASASQCGVTSRYTKPEQLGCDRWAALIAAWYRVQRACLVVDVGTAMTVDTLSSTGEFLGGIIVPGPDAMKQALAGCAGTLAAPVSSCFQNFPVNTENALYSGMIQALSGALERMYRLLSSYSEKQTLTEVIMTGGGAALLAQHIHIPHRIVDSLVLEGLAIIAKSGNFDYNKK.

11–18 (DSGNTAIK) is an ATP binding site. Substrate is bound by residues Y96 and 103–106 (GCDR). D105 acts as the Proton acceptor in catalysis. D125 contacts K(+). T128 lines the ATP pocket. T179 is a binding site for substrate.

The protein belongs to the type III pantothenate kinase family. As to quaternary structure, homodimer. Requires NH4(+) as cofactor. The cofactor is K(+).

It is found in the cytoplasm. The catalysed reaction is (R)-pantothenate + ATP = (R)-4'-phosphopantothenate + ADP + H(+). The protein operates within cofactor biosynthesis; coenzyme A biosynthesis; CoA from (R)-pantothenate: step 1/5. In terms of biological role, catalyzes the phosphorylation of pantothenate (Pan), the first step in CoA biosynthesis. This chain is Type III pantothenate kinase, found in Nitrosomonas eutropha (strain DSM 101675 / C91 / Nm57).